The primary structure comprises 710 residues: MSMSFRPLKYKRHTQTSTQHHPKQDIYFHQQPPGPPLGQTMSPPQWQVEESNPDFLPNNFNQLNLDPQQPEAKGGQQMSKGPENNLYRKYEEKVRPCIDLIDSLRALGVEQDLALPAIAVIGDQSSGKSSVLEALSGVALPRGSGIITRCPLVLKLTKRECEWTGKITYRNITQQLQNPSEVEWEIRRAQNIIAGNGLGISHELINLEITSPEVPDLTLIDLPGITRVAVENQPQDIGLQIKALIKKYIQRQETINLVVVPCNVDIATTEALSMAQEVDPDGDRTIGILTKPDLVDKGTEKGVLKVMQNLTYHLKKGYMIVKCRGQQDITNKLSLAEATRKETMFFETHPYFRILLDEGKATVPLLAERLTTELIWHINKSLPLLENQIKEKHQRATEELQQYGDDIPSDEGDKMFFLIEKIKVFNEDIGKLIEGEEIVMETESRLCNKIREEFTSWILILTTNIEKVKSILNEEVSKYEKKYRGKELLGFVNYKTFETVVKHYLGQLIDPALKMLQKAMEIVWQTFKDTAKKHFAEFCNLHQTVQNKIEDIKTKQMAEAANLIQLQFRMEKLVFCQDQIYGVVLNKVREDIFNSMGKASETPQSKQPFLNDQSSISSIVEIGVHLNAYFMETSKRLANQIPFIIQYFMLQENGDKVQKAMMQLLQDTQHYSWLLQEQSDTATKRKFLKEKIFRLTQAQQALYEFPHFKG.

Residues 1–51 (MSMSFRPLKYKRHTQTSTQHHPKQDIYFHQQPPGPPLGQTMSPPQWQVEES) are disordered. Residues 39 to 50 (QTMSPPQWQVEE) are compositionally biased toward polar residues. The 272-residue stretch at 112-383 (DLALPAIAVI…LIWHINKSLP (272 aa)) folds into the Dynamin-type G domain. Residues 122–129 (GDQSSGKS) form a G1 motif region. 122–129 (GDQSSGKS) is a binding site for GTP. The tract at residues 147 to 149 (ITR) is G2 motif. Residues 221–224 (DLPG) form a G3 motif region. Residues 221–225 (DLPGI) and 290–293 (TKPD) each bind GTP. The G4 motif stretch occupies residues 290–293 (TKPD). Residues 322-325 (KCRG) form a G5 motif region. Residues 619-710 (IVEIGVHLNA…ALYEFPHFKG (92 aa)) form the GED domain.

This sequence belongs to the TRAFAC class dynamin-like GTPase superfamily. Dynamin/Fzo/YdjA family.

It localises to the cytoplasm. It is found in the nucleus. Its function is as follows. Interferon-induced dynamin-like GTPase with antiviral activity against vesicular stomatitis virus (VSV). The polypeptide is Interferon-induced GTP-binding protein Mx2 (MX2) (Bos taurus (Bovine)).